The following is a 115-amino-acid chain: Histone H2A-Bbd type 1 (115 aa).

A disordered region spans residues 1–21 (MPRRRRRRGSSGAGGRGRTCS). The docking domain stretch occupies residues 87–115 (LLDMVVHNDRLLSTLFNTTTISQVAPGED).

It belongs to the histone H2A family. In terms of assembly, the nucleosome is a histone octamer containing two molecules each of H2A, H2B, H3 and H4 assembled in one H3-H4 heterotetramer and two H2A-H2B heterodimers. May be incorporated into a proportion of nucleosomes, replacing one or more H2A molecules. As to expression, present in mature sperm.

It is found in the nucleus. The protein localises to the chromosome. Its function is as follows. Atypical histone H2A which can replace conventional H2A in some nucleosomes and is associated with active transcription and mRNA processing. Nucleosomes wrap and compact DNA into chromatin, limiting DNA accessibility to the cellular machineries which require DNA as a template. Histones thereby play a central role in transcription regulation, DNA repair, DNA replication and chromosomal stability. Nucleosomes containing this histone are less rigid and organize less DNA than canonical nucleosomes in vivo. They are enriched in actively transcribed genes and associate with the elongating form of RNA polymerase. They associate with spliceosome components and are required for mRNA splicing. The sequence is that of Histone H2A-Bbd type 1 from Homo sapiens (Human).